A 281-amino-acid chain; its full sequence is Bis(5'-nucleosyl)-tetraphosphatase, symmetrical (281 aa).

It belongs to the Ap4A hydrolase family.

It carries out the reaction P(1),P(4)-bis(5'-adenosyl) tetraphosphate + H2O = 2 ADP + 2 H(+). Hydrolyzes diadenosine 5',5'''-P1,P4-tetraphosphate to yield ADP. The sequence is that of Bis(5'-nucleosyl)-tetraphosphatase, symmetrical from Delftia acidovorans (strain DSM 14801 / SPH-1).